A 373-amino-acid polypeptide reads, in one-letter code: Transaldolase (373 aa).

The active-site Schiff-base intermediate with substrate is the Lys-143.

Belongs to the transaldolase family. Type 2 subfamily.

Its subcellular location is the cytoplasm. It carries out the reaction D-sedoheptulose 7-phosphate + D-glyceraldehyde 3-phosphate = D-erythrose 4-phosphate + beta-D-fructose 6-phosphate. It participates in carbohydrate degradation; pentose phosphate pathway; D-glyceraldehyde 3-phosphate and beta-D-fructose 6-phosphate from D-ribose 5-phosphate and D-xylulose 5-phosphate (non-oxidative stage): step 2/3. Transaldolase is important for the balance of metabolites in the pentose-phosphate pathway. In Mycobacterium ulcerans (strain Agy99), this protein is Transaldolase.